Here is a 352-residue protein sequence, read N- to C-terminus: 4-hydroxy-3-methylbut-2-en-1-yl diphosphate synthase (flavodoxin) (352 aa).

Residues Cys262, Cys265, Cys297, and Glu304 each coordinate [4Fe-4S] cluster.

Belongs to the IspG family. Requires [4Fe-4S] cluster as cofactor.

It catalyses the reaction (2E)-4-hydroxy-3-methylbut-2-enyl diphosphate + oxidized [flavodoxin] + H2O + 2 H(+) = 2-C-methyl-D-erythritol 2,4-cyclic diphosphate + reduced [flavodoxin]. It functions in the pathway isoprenoid biosynthesis; isopentenyl diphosphate biosynthesis via DXP pathway; isopentenyl diphosphate from 1-deoxy-D-xylulose 5-phosphate: step 5/6. In terms of biological role, converts 2C-methyl-D-erythritol 2,4-cyclodiphosphate (ME-2,4cPP) into 1-hydroxy-2-methyl-2-(E)-butenyl 4-diphosphate. This chain is 4-hydroxy-3-methylbut-2-en-1-yl diphosphate synthase (flavodoxin), found in Nitratiruptor sp. (strain SB155-2).